Consider the following 492-residue polypeptide: Cysteine--tRNA ligase (492 aa).

A Zn(2+)-binding site is contributed by C29. The short motif at 31 to 41 is the 'HIGH' region element; that stretch reads LTTSDPPHLGH. 3 residues coordinate Zn(2+): C229, H254, and E258. Residues 286 to 290 carry the 'KMSKS' region motif; sequence KMSSS.

The protein belongs to the class-I aminoacyl-tRNA synthetase family. Zn(2+) is required as a cofactor.

It is found in the cytoplasm. It carries out the reaction tRNA(Cys) + L-cysteine + ATP = L-cysteinyl-tRNA(Cys) + AMP + diphosphate. The polypeptide is Cysteine--tRNA ligase (Haloarcula marismortui (strain ATCC 43049 / DSM 3752 / JCM 8966 / VKM B-1809) (Halobacterium marismortui)).